We begin with the raw amino-acid sequence, 223 residues long: MSSLSKPNRQFLSPTTNNQDTGREQTIACARDMVVLYNECLKNHAVSLGGHALDGCGEFTPKSTTILTDPPSLRCDACGCHRNFHRRSPSDGFSQHRSPPSPLQLQPLAPVPNLLLSLSSGFFGPSDQEVKNKFTVERDVRKTAMIKKHKRTKFTAEQKVKMRGFAERAGWKINGWDEKWVREFCSEVGIERKVLKVWIHNNKYFNNGRSRDTTSSMSLNLKL.

Residues 1-20 (MSSLSKPNRQFLSPTTNNQD) show a composition bias toward polar residues. A disordered region spans residues 1 to 24 (MSSLSKPNRQFLSPTTNNQDTGRE). Residues 37–88 (YNECLKNHAVSLGGHALDGCGEFTPKSTTILTDPPSLRCDACGCHRNFHRRS) form a ZF-HD dimerization-type; degenerate zinc finger. A DNA-binding region (homeobox; atypical) is located at residues 147–204 (KKHKRTKFTAEQKVKMRGFAERAGWKINGWDEKWVREFCSEVGIERKVLKVWIHNNKY).

In terms of assembly, homo- and heterodimer with other ZFHD proteins. Interacts with ZHD11.

It localises to the nucleus. Its function is as follows. Putative transcription factor. This is Zinc-finger homeodomain protein 12 (ZHD12) from Arabidopsis thaliana (Mouse-ear cress).